A 132-amino-acid chain; its full sequence is UPF0299 membrane protein YohJ (132 aa).

Transmembrane regions (helical) follow at residues 7–27, 31–51, 63–83, and 93–113; these read IIWQ…AGIF, LLPI…VLLA, GCYV…VGVM, and FGPV…VVSW.

This sequence belongs to the UPF0299 family.

It is found in the cell inner membrane. The sequence is that of UPF0299 membrane protein YohJ from Salmonella agona (strain SL483).